We begin with the raw amino-acid sequence, 263 residues long: Hydroxyethylthiazole kinase (263 aa).

Met-39 serves as a coordination point for substrate. Residues Lys-115 and Thr-160 each coordinate ATP. Gly-187 provides a ligand contact to substrate.

Belongs to the Thz kinase family. Mg(2+) serves as cofactor.

It carries out the reaction 5-(2-hydroxyethyl)-4-methylthiazole + ATP = 4-methyl-5-(2-phosphooxyethyl)-thiazole + ADP + H(+). It functions in the pathway cofactor biosynthesis; thiamine diphosphate biosynthesis; 4-methyl-5-(2-phosphoethyl)-thiazole from 5-(2-hydroxyethyl)-4-methylthiazole: step 1/1. Catalyzes the phosphorylation of the hydroxyl group of 4-methyl-5-beta-hydroxyethylthiazole (THZ). The chain is Hydroxyethylthiazole kinase from Staphylococcus aureus (strain bovine RF122 / ET3-1).